The chain runs to 1292 residues: MTTTRRNKRNNKLYKNIKAIKLSIASNDTILNWSEGEVTKAETINYKSLKPEPGGLFDEAIFGPVKDYECACGKFKKIKYRGVRCDRCGVWVTESIVRRERMGHIALVSPVAHIWMSKELPSPSKISLVLNISYKEVEQVLYFVNYIVLDTGKIKDDKIMPFKFKEVLDLTGKGSLSTRQKMRRVIGYIFRNLIKSKSSEDYRKGKIFYESLKNSSLPFSLNDAFNYIKKYTGFRVGIGAEAILELLNKIDLNLEFSRLNDALRKAKKDSVEDAKVKKILRQLETISWFRNSKLHPKNMILHTVPVIPPDIRPIIQLDGAKFTTSDINNFYRRVIIRNDRLRRILEDGTVPSIVVNNEKRLLQESVDALFDNSSRHKPSLSKDKRSLKSLTDRLKGKQGLFRHNLLGKRVDYSGRSVIVVGPELKMYEVGIPALMILKLFKPFIIHGLINKFDENGNEIRPIAASIRQAEDMIKNQDDLIWGIVYDVIKDRPVLLNRAPTLHRLGIQAFEPRIVDGKAIRLHPLVTTAFNADFDGDQMAVHVPLSENAVNEARAVLLASKHILGLKDGRPIVTPTQDMVLGNYYLTTERKGQLGEGIIFSTVYEARAAYESQKVHLHAIVGISTKAFPNKKFACQGTLITTVGKIIFNDVLGNNVPYINDGEFDENACPEKFIVKQGEDVRQSILKHQIIPAFSKKVISKLIDLLYLLLEFKDLPKTLDNIKALGFKYSTFSSTTVSVFDIPKYTNKQNYFDSADQQVLKYKQFYNKGLLTDDERYKRVVKLWNNVKEKVSDEIQNLIKQEQYRDNSIVVMADSGARCNISNFTQLFGMRGLMSKSFNYERNNQSKIIKDTIEVPIKHSFFEGLTINEYFNSSYGARKGMTDTAMKTAKSGYMTRKLVDATHELIINHDDCGTRKGIVVEAIVETKTKSLIESLFDRIVNRYSITPIVDPETQKTIVEANSLITTQLAKQICATSIKEVLVRSVIYCERENGICQYCFGIDLSTGKLVELGTAVGVIAAQSIGEPGTQLTMRTFHTGGVSTENNLAQGFERLKQIFEVVTPKDFEKAVISEVKGTVKSITTVQNAQEVVIKSNVDERIYTIPFSAQIRVHVGDQVSPGSKITEGSVDIKQLLRIAGIQRVRQYMIVEIQKVYRIQGIDIADKYVEIIIRQLTNLLQVTDAGNSNLFVGQLVHSHYLNELNKSLLLAGKMPVIAINQVFGIDEAASKSNSFLSAASFQDTKKILTDAAVKNQVDYLLGLKENVIIGGKIPAGTGFLTDEELTFLGSKTVAEEY.

Positions 70, 72, 85, and 88 each coordinate Zn(2+). D532, D534, and D536 together coordinate Mg(2+). Zn(2+) contacts are provided by C911, C987, C994, and C997.

This sequence belongs to the RNA polymerase beta' chain family. As to quaternary structure, the RNAP catalytic core consists of 2 alpha, 1 beta, 1 beta' and 1 omega subunit. When a sigma factor is associated with the core the holoenzyme is formed, which can initiate transcription. The cofactor is Mg(2+). It depends on Zn(2+) as a cofactor.

It carries out the reaction RNA(n) + a ribonucleoside 5'-triphosphate = RNA(n+1) + diphosphate. In terms of biological role, DNA-dependent RNA polymerase catalyzes the transcription of DNA into RNA using the four ribonucleoside triphosphates as substrates. This chain is DNA-directed RNA polymerase subunit beta', found in Mycoplasma genitalium (strain ATCC 33530 / DSM 19775 / NCTC 10195 / G37) (Mycoplasmoides genitalium).